A 282-amino-acid chain; its full sequence is MTIKLRFVASLALVFGLAAASVPAQASGGDTPHLQSWSFAGPFGQYDKAQLRRGFQVFQNVCVSCHTLENGGFRNLPSRAAPNWPLDEVRQLAASWPVQVKDINDKGDPMQRAPKLPDRIPSQYANEAAARIIHNGAVPPDLSVIAKARTFQRGFPWWVTDIFTQYNENGVDYIVALLNGYEDPPERFKVPDGSFYNKYFPGHIIGMTPPIADGLVTYGDGTPETQLQYSKDVAAFLMWAAEPTLDVRKRIGWWVLGFLVIFTGLLVATKIVVWRPVKKGLA.

Positions 1–24 (MTIKLRFVASLALVFGLAAASVPA) are cleaved as a signal peptide. Residues Cys-62, Cys-65, His-66, and Met-207 each contribute to the heme c site. Residues 253–273 (WWVLGFLVIFTGLLVATKIVV) form a helical membrane-spanning segment.

As to quaternary structure, the main subunits of complex b-c1 are: cytochrome b, cytochrome c1 and the Rieske protein. Binds 1 heme c group covalently per subunit.

Its subcellular location is the cell membrane. In terms of biological role, component of the ubiquinol-cytochrome c reductase complex (complex III or cytochrome b-c1 complex), which is a respiratory chain that generates an electrochemical potential coupled to ATP synthesis. c1 functions as an electron donor to cytochrome c. This chain is Cytochrome c1 (petC), found in Blastochloris viridis (Rhodopseudomonas viridis).